The primary structure comprises 426 residues: Endoglucanase (426 aa).

An N-terminal signal peptide occupies residues 1 to 19 (MRRCMPLVAASVAALMLAG). C20 carries the N-palmitoyl cysteine lipid modification. The S-diacylglycerol cysteine moiety is linked to residue C20. Residues 20-45 (CGGGDGDPSLSTASVSATDTTTLKPA) constitute a propeptide that is removed on maturation. The Proton donor role is filled by E249. E361 acts as the Nucleophile in catalysis.

This sequence belongs to the glycosyl hydrolase 5 (cellulase A) family.

It localises to the cell membrane. The catalysed reaction is Endohydrolysis of (1-&gt;4)-beta-D-glucosidic linkages in cellulose, lichenin and cereal beta-D-glucans.. The protein is Endoglucanase (egl) of Ralstonia solanacearum (Pseudomonas solanacearum).